We begin with the raw amino-acid sequence, 234 residues long: LexA repressor (234 aa).

Basic and acidic residues predominate over residues 1-11; sequence MNEATSHEGPK. A disordered region spans residues 1 to 34; the sequence is MNEATSHEGPKRSLPGRPPGIRADSSGLTDRQRR. The H-T-H motif DNA-binding region spans 52–72; sequence MREIGQAVGLSSTSSVAHQLM. A compositionally biased stretch (basic and acidic residues) spans 83–94; it reads DPHRPRAYEVRG. The tract at residues 83-109 is disordered; sequence DPHRPRAYEVRGSDQSSSVQPTDTAGK. Positions 95–105 are enriched in polar residues; that stretch reads SDQSSSVQPTD. Active-site for autocatalytic cleavage activity residues include Ser158 and Lys195.

The protein belongs to the peptidase S24 family. Homodimer.

The catalysed reaction is Hydrolysis of Ala-|-Gly bond in repressor LexA.. Represses a number of genes involved in the response to DNA damage (SOS response), including recA and lexA. In the presence of single-stranded DNA, RecA interacts with LexA causing an autocatalytic cleavage which disrupts the DNA-binding part of LexA, leading to derepression of the SOS regulon and eventually DNA repair. This is LexA repressor from Streptomyces avermitilis (strain ATCC 31267 / DSM 46492 / JCM 5070 / NBRC 14893 / NCIMB 12804 / NRRL 8165 / MA-4680).